The sequence spans 144 residues: Lysozyme C II (144 aa).

Residues Met-1–Ala-15 form the signal peptide. The 129-residue stretch at Lys-16–Val-144 folds into the C-type lysozyme domain. 4 disulfide bridges follow: Cys-21-Cys-142, Cys-45-Cys-130, Cys-79-Cys-95, and Cys-91-Cys-109. Residues Glu-50 and Asp-67 contribute to the active site.

The protein resides in the secreted. It carries out the reaction Hydrolysis of (1-&gt;4)-beta-linkages between N-acetylmuramic acid and N-acetyl-D-glucosamine residues in a peptidoglycan and between N-acetyl-D-glucosamine residues in chitodextrins.. Lysozymes have primarily a bacteriolytic function; those in tissues and body fluids are associated with the monocyte-macrophage system and enhance the activity of immunoagents. Has antibacterial activity against the Gram positive bacterium P.citreus. Has no antibacterial activity against the Gram negative bacteria E.coli and Y.ruckeri. Does not have hemolytic activity against trout erythrocytes. This is Lysozyme C II from Oncorhynchus mykiss (Rainbow trout).